Here is a 158-residue protein sequence, read N- to C-terminus: DNA-binding transcriptional repressor RacR (158 aa).

As to quaternary structure, homooctamer.

In terms of biological role, transcriptional regulator that represses the expression of ydaS and ydaT under normal physiological conditions. It binds to its own upstream sequence and represses the adjacent and divergently coded ydaS-ydaT operon. RacR-mediated down-regulation of ydaS and ydaT may be critical for cell survival. RacR ensures that the prophage DNA is maintained in the genome. When the expression of the racR gene is reduced, the prophage Rac is excised from the genome, possibly to counteract the lethal toxicity of YdaT. This chain is DNA-binding transcriptional repressor RacR (racR), found in Escherichia coli (strain K12).